A 95-amino-acid polypeptide reads, in one-letter code: MDIYSIIKKPVFTEKALNLKESQNKVVIEVHPDVNKVQVKKAFEEIFKVKVDSVSIINVKPKIKRVGLHFTKTKKTKKAIVTLKAGEKLDLIEGV.

Belongs to the universal ribosomal protein uL23 family. As to quaternary structure, part of the 50S ribosomal subunit. Contacts protein L29, and trigger factor when it is bound to the ribosome.

One of the early assembly proteins it binds 23S rRNA. One of the proteins that surrounds the polypeptide exit tunnel on the outside of the ribosome. Forms the main docking site for trigger factor binding to the ribosome. In Thermodesulfovibrio yellowstonii (strain ATCC 51303 / DSM 11347 / YP87), this protein is Large ribosomal subunit protein uL23.